The following is a 69-amino-acid chain: Light-harvesting protein B-1015 alpha chain (69 aa).

At 2 to 20 the chain is on the cytoplasmic side; sequence ATEYRTASWKLWLILDPRR. Residues 21 to 41 traverse the membrane as a helical segment; sequence VLTALFVYLTVIALLIHFGLL. Position 37 (H37) interacts with a bacteriochlorophyll. Residues 42–59 are Periplasmic-facing; the sequence is STDRLNWWEFQRGLPKAA. Residues 60-69 constitute a propeptide that is removed on maturation; sequence SLVVVPPAVG.

This sequence belongs to the antenna complex alpha subunit family. The core complex is formed by different alpha and beta chains, binding bacteriochlorophyll molecules, and arranged most probably in tetrameric structures disposed around the reaction center. The non-pigmented gamma chains may constitute additional components.

It is found in the cell inner membrane. Its function is as follows. Antenna complexes are light-harvesting systems, which transfer the excitation energy to the reaction centers. The polypeptide is Light-harvesting protein B-1015 alpha chain (pufA) (Blastochloris viridis (Rhodopseudomonas viridis)).